The primary structure comprises 283 residues: Protein/nucleic acid deglycase HchA (283 aa).

3 residues coordinate Zn(2+): His-86, Glu-91, and His-123. Residue Cys-185 is the Nucleophile of the active site.

The protein belongs to the peptidase C56 family. HchA subfamily. Homodimer.

The protein resides in the cytoplasm. The catalysed reaction is N(omega)-(1-hydroxy-2-oxopropyl)-L-arginyl-[protein] + H2O = lactate + L-arginyl-[protein] + H(+). It carries out the reaction N(6)-(1-hydroxy-2-oxopropyl)-L-lysyl-[protein] + H2O = lactate + L-lysyl-[protein] + H(+). The enzyme catalyses S-(1-hydroxy-2-oxopropyl)-L-cysteinyl-[protein] + H2O = lactate + L-cysteinyl-[protein] + H(+). It catalyses the reaction N(omega)-(1-hydroxy-2-oxoethyl)-L-arginyl-[protein] + H2O = L-arginyl-[protein] + glycolate + H(+). The catalysed reaction is N(6)-(1-hydroxy-2-oxoethyl)-L-lysyl-[protein] + H2O = glycolate + L-lysyl-[protein] + H(+). It carries out the reaction S-(1-hydroxy-2-oxoethyl)-L-cysteinyl-[protein] + H2O = glycolate + L-cysteinyl-[protein] + H(+). The enzyme catalyses N(2)-(1-hydroxy-2-oxopropyl)-dGTP + H2O = lactate + dGTP + H(+). It catalyses the reaction N(2)-(1-hydroxy-2-oxopropyl)-GTP + H2O = lactate + GTP + H(+). The catalysed reaction is N(2)-(1-hydroxy-2-oxopropyl)-GDP + H2O = lactate + GDP + H(+). It carries out the reaction N(2)-(1-hydroxy-2-oxopropyl)-GMP + H2O = lactate + GMP + H(+). The enzyme catalyses N(2)-(1-hydroxy-2-oxoethyl)-dGTP + H2O = dGTP + glycolate + H(+). It catalyses the reaction N(2)-(1-hydroxy-2-oxoethyl)-GTP + H2O = glycolate + GTP + H(+). The catalysed reaction is N(2)-(1-hydroxy-2-oxoethyl)-GDP + H2O = glycolate + GDP + H(+). It carries out the reaction N(2)-(1-hydroxy-2-oxoethyl)-GMP + H2O = glycolate + GMP + H(+). The enzyme catalyses an N(2)-(1-hydroxy-2-oxopropyl)-guanosine in RNA + H2O = a guanosine in RNA + lactate + H(+). It catalyses the reaction an N(2)-(1-hydroxy-2-oxopropyl)-2'-deoxyguanosine in DNA + H2O = a 2'-deoxyguanosine in DNA + lactate + H(+). The catalysed reaction is an N(2)-(1-hydroxy-2-oxoethyl)-guanosine in RNA + H2O = a guanosine in RNA + glycolate + H(+). It carries out the reaction an N(2)-(1-hydroxy-2-oxoethyl)-2'-deoxyguanosine in DNA + H2O = a 2'-deoxyguanosine in DNA + glycolate + H(+). Protein and nucleotide deglycase that catalyzes the deglycation of the Maillard adducts formed between amino groups of proteins or nucleotides and reactive carbonyl groups of glyoxals. Thus, functions as a protein deglycase that repairs methylglyoxal- and glyoxal-glycated proteins, and releases repaired proteins and lactate or glycolate, respectively. Deglycates cysteine, arginine and lysine residues in proteins, and thus reactivates these proteins by reversing glycation by glyoxals. Acts on early glycation intermediates (hemithioacetals and aminocarbinols), preventing the formation of Schiff bases and advanced glycation endproducts (AGE). Also functions as a nucleotide deglycase able to repair glycated guanine in the free nucleotide pool (GTP, GDP, GMP, dGTP) and in DNA and RNA. Is thus involved in a major nucleotide repair system named guanine glycation repair (GG repair), dedicated to reversing methylglyoxal and glyoxal damage via nucleotide sanitization and direct nucleic acid repair. Plays an important role in protecting cells from carbonyl stress. The chain is Protein/nucleic acid deglycase HchA from Escherichia coli (strain K12 / MC4100 / BW2952).